The primary structure comprises 359 residues: Putative nucleotidyltransferase MAB21L1 (359 aa).

Residues 23-24 and 63-66 contribute to the a ribonucleoside 5'-triphosphate site; these read RK and YEGL. Residues E73 and E75 each coordinate Mg(2+). Residues K248 and 252-255 contribute to the a ribonucleoside 5'-triphosphate site; that span reads SLLK.

The protein belongs to the mab-21 family. In terms of assembly, monomer. Homodecamer; composed of 2 back to back homopentamers. The protein may exist as monomer in solution and oiligomerizes upon ligand binding.

The protein localises to the nucleus. Its function is as follows. Putative nucleotidyltransferase required for several aspects of embryonic development including normal development of the eye. It is unclear whether it displays nucleotidyltransferase activity in vivo. Binds single-stranded RNA (ssRNA). The polypeptide is Putative nucleotidyltransferase MAB21L1 (mab21l1) (Xenopus tropicalis (Western clawed frog)).